Here is a 519-residue protein sequence, read N- to C-terminus: Spermidine/putrescine import ATP-binding protein PotA (519 aa).

In terms of domain architecture, ABC transporter spans 6 to 401 (LHLRDITKIY…PNSLWVANFI (396 aa)). 39–46 (GPSGCGKT) lines the ATP pocket. The segment at 107 to 270 (RKPKDNVDQS…EQFENKNITR (164 aa)) is insert.

Belongs to the ABC transporter superfamily. Spermidine/putrescine importer (TC 3.A.1.11.1) family. As to quaternary structure, the complex is composed of two ATP-binding proteins (PotA), two transmembrane proteins (PotB and PotC) and a solute-binding protein (PotD).

It localises to the cell membrane. The enzyme catalyses ATP + H2O + polyamine-[polyamine-binding protein]Side 1 = ADP + phosphate + polyamineSide 2 + [polyamine-binding protein]Side 1.. In terms of biological role, part of the ABC transporter complex PotABCD involved in spermidine/putrescine import. Responsible for energy coupling to the transport system. The chain is Spermidine/putrescine import ATP-binding protein PotA from Ureaplasma parvum serovar 3 (strain ATCC 700970).